We begin with the raw amino-acid sequence, 325 residues long: Elongation factor P--(R)-beta-lysine ligase (325 aa).

Residue 76–78 participates in substrate binding; sequence SPE. Residues 100-102 and Asn109 each bind ATP; that span reads RNE. Tyr118 lines the substrate pocket. 244–245 contributes to the ATP binding site; it reads EL. Glu251 is a binding site for substrate. Gly300 contacts ATP.

Belongs to the class-II aminoacyl-tRNA synthetase family. EpmA subfamily. In terms of assembly, homodimer.

The enzyme catalyses D-beta-lysine + L-lysyl-[protein] + ATP = N(6)-((3R)-3,6-diaminohexanoyl)-L-lysyl-[protein] + AMP + diphosphate + H(+). With EpmB is involved in the beta-lysylation step of the post-translational modification of translation elongation factor P (EF-P). Catalyzes the ATP-dependent activation of (R)-beta-lysine produced by EpmB, forming a lysyl-adenylate, from which the beta-lysyl moiety is then transferred to the epsilon-amino group of a conserved specific lysine residue in EF-P. The chain is Elongation factor P--(R)-beta-lysine ligase from Yersinia pseudotuberculosis serotype O:1b (strain IP 31758).